A 151-amino-acid chain; its full sequence is UPAR/Ly6 domain-containing protein crok (151 aa).

An N-terminal signal peptide occupies residues 1-23; the sequence is MKTLEKYILFAIVLCCLLQLGQA. Residues 24-128 lie on the Lumenal side of the membrane; that stretch reads IKCWDCRSDN…KDGCNSAGIH (105 aa). 5 disulfides stabilise this stretch: Cys-26–Cys-68, Cys-29–Cys-37, Cys-51–Cys-85, Cys-100–Cys-114, and Cys-116–Cys-122. Asn-43 is a glycosylation site (N-linked (GlcNAc...) asparagine). A lipid anchor (GPI-anchor amidated serine) is attached at Ser-124. Positions 125-151 are cleaved as a propeptide — removed in mature form; it reads AGIHRLGLMGVLTGTLLSVIVAHLLRQ. A helical transmembrane segment spans residues 129 to 149; that stretch reads RLGLMGVLTGTLLSVIVAHLL. Residues 150–151 lie on the Cytoplasmic side of the membrane; it reads RQ.

Belongs to the quiver family.

It is found in the vesicle. Its subcellular location is the membrane. The protein resides in the endomembrane system. Required for septate junction assembly, possibly by organizing the preassembly and transport of septate junction proteins including dlg1/disks large 1 and Nrx-IV/Neurexin-IV. Involved in paracellular barrier functions of trachea, hindgut and salivary gland mediated by epithelial cell septate junctions. This chain is UPAR/Ly6 domain-containing protein crok, found in Drosophila melanogaster (Fruit fly).